A 713-amino-acid chain; its full sequence is MDSLCLNSGLHGVIPAITAVGNGGCGGVVEVRATASAPSQKRGPFGFSFKYPLTPFWSRGGGGGIASRRRSGLCLDDAVLVDSGDSRKPIAEETAVEMDTERRNGSWVLKILDVQSTWKHEEEEDDDEVEDEDGDEDEEVELDDAVVSEDDGGCDVCSVLEDDGNEANKFQLDRESFSKLLRRVTLPESKLYAQLSYLGNLAYSISKIKPANLSKYYGLRFVTSSAEKTESALKAENGEVSGETKPIVEAEEEVEEEEKNKSRKISASAAYEIVASAASYLHSRTNNILPFNSSSKAENSDKHDVNLTNAESSSDVAYSVTSVVAAEEDVKQAVADDLKSTISSPCDWFICDDDQSHTRFVVIQGSESLASWQANLLFEPIEFEGLGAIVHRGIYEAAKGMYEQMLPEVKAHIKTHGTSAKFRFTGHSLGGSLSLLLNLMLLVRGEVPASSLLPVITYGAPFVLCGGDRLLKKLGLPKSHVQAIVMHRDIVPRAFSCNYPYHVAELLKAVNGNFRSHPCLNKQSMLYSPMGELLILQPDETFSPGHELLPSGNGLYLLTSDFESPDIEDSDEERLRAAQTVFLNTPHPLDILSDRSAYGSSGTIQRDHDMNSYLKAVRSVIRKEVNQIRRAKREHRRSLWWPILVARESGSSGIAVSNGQINGQDFSGMMQTGRKSLQRFSRLVASQHMPLIVVMLFPVKLLFLGAFNVFSFR.

The transit peptide at 1–32 directs the protein to the chloroplast; that stretch reads MDSLCLNSGLHGVIPAITAVGNGGCGGVVEVR. Disordered regions lie at residues 118–140 and 232–261; these read WKHE…DEEV and ALKA…EKNK. Acidic residues predominate over residues 122 to 140; sequence EEEDDDEVEDEDGDEDEEV. A GXSXG motif is present at residues 426–430; that stretch reads GHSLG. Ser428 (acyl-ester intermediate) is an active-site residue. Catalysis depends on charge relay system residues Asp489 and His608.

This sequence belongs to the AB hydrolase superfamily. Lipase family.

It localises to the plastid. It is found in the chloroplast membrane. The protein localises to the chloroplast stroma. The catalysed reaction is a 1,2-diacyl-3-O-(beta-D-galactosyl)-sn-glycerol + 2 H2O = 3-beta-D-galactosyl-sn-glycerol + 2 a fatty acid + 2 H(+). The enzyme catalyses a 1,2-diacyl-sn-glycero-3-phosphocholine + H2O = a 2-acyl-sn-glycero-3-phosphocholine + a fatty acid + H(+). It carries out the reaction 1-hexadecanoyl-2-(9Z-octadecenoyl)-sn-glycero-3-phosphocholine + H2O = 2-(9Z-octadecenoyl)-sn-glycero-3-phosphocholine + hexadecanoate + H(+). It catalyses the reaction 1,2-di-(9Z-octadecenoyl)-sn-glycero-3-phosphocholine + H2O = 2-(9Z-octadecenoyl)-sn-glycero-3-phosphocholine + (9Z)-octadecenoate + H(+). The catalysed reaction is 1-octadecanoyl-2-(9Z-octadecenoyl)-sn-glycero-3-phosphocholine + H2O = 2-(9Z-octadecenoyl)-sn-glycero-3-phosphocholine + octadecanoate + H(+). The enzyme catalyses 1-octadecanoyl-2-(9Z,12Z)-octadecadienoyl-sn-glycero-3-phosphocholine + H2O = 2-(9Z,12Z-octadecadienoyl)-sn-glycero-3-phosphocholine + octadecanoate + H(+). It carries out the reaction 1,2-di-(9Z,12Z-octadecadienoyl)-sn-glycero-3-phosphocholine + H2O = 2-(9Z,12Z-octadecadienoyl)-sn-glycero-3-phosphocholine + (9Z,12Z)-octadecadienoate + H(+). It catalyses the reaction 1-(9Z-octadecenoyl)-2-hexadecanoyl-sn-glycero-3-phosphocholine + H2O = 2-hexadecanoyl-sn-glycero-3-phosphocholine + (9Z)-octadecenoate + H(+). In terms of biological role, sn-1-specific phospholipase A1 that catalyzes the initial step of oxylipins and jasmonate (JA) biosynthesis. Hydrolyzes polyunsaturated acyl groups preferentially from chloroplastic monogalactosyldiacylglycerol (MGDG). May function downstream of abscisic acid (ABA) and provide a link between ABA-mediated abiotic stress responses and oxylipin and JA signalings. In vitro, possesses broad substrate specificity. Can hydrolyze the galactolipids monogalactosyldiacylglycerol (MGDG) and digalactosyldiacylglycerol (DGDG), the sulfolipid sulfoquinovosyldiacylglycerol (SQDG), and the phoshpolipids phosphatidylcholine (PC), and phosphatidylglycerol (PG). This is Phospholipase A1 PLIP2, chloroplastic from Arabidopsis thaliana (Mouse-ear cress).